A 347-amino-acid chain; its full sequence is Histone deacetylase 11 (347 aa).

Positions 14 to 326 (TRWPIVYSPR…LNLFGLGLIG (313 aa)) are histone deacetylase. Residue H143 is part of the active site.

The protein belongs to the histone deacetylase family. As to quaternary structure, interacts with HDAC6. As to expression, weakly expressed in most tissues. Strongly expressed in brain, heart, skeletal muscle, kidney and testis.

The protein localises to the nucleus. The enzyme catalyses N(6)-acetyl-L-lysyl-[histone] + H2O = L-lysyl-[histone] + acetate. Responsible for the deacetylation of lysine residues on the N-terminal part of the core histones (H2A, H2B, H3 and H4). Histone deacetylation gives a tag for epigenetic repression and plays an important role in transcriptional regulation, cell cycle progression and developmental events. Histone deacetylases act via the formation of large multiprotein complexes. The sequence is that of Histone deacetylase 11 (HDAC11) from Homo sapiens (Human).